Reading from the N-terminus, the 429-residue chain is Adenylosuccinate synthetase (429 aa).

Residues 12–18 (GDEGKGK) and 40–42 (GHT) each bind GTP. The active-site Proton acceptor is the Asp-13. Mg(2+)-binding residues include Asp-13 and Gly-40. IMP-binding positions include 13–16 (DEGK), 38–41 (NAGH), Thr-129, Arg-143, Gln-223, Thr-238, and Arg-302. His-41 acts as the Proton donor in catalysis. 298 to 304 (VVTGRKR) provides a ligand contact to substrate. GTP contacts are provided by residues Arg-304, 330–332 (KLD), and 412–414 (STS).

It belongs to the adenylosuccinate synthetase family. Homodimer. The cofactor is Mg(2+).

It localises to the cytoplasm. The enzyme catalyses IMP + L-aspartate + GTP = N(6)-(1,2-dicarboxyethyl)-AMP + GDP + phosphate + 2 H(+). It participates in purine metabolism; AMP biosynthesis via de novo pathway; AMP from IMP: step 1/2. Plays an important role in the de novo pathway of purine nucleotide biosynthesis. Catalyzes the first committed step in the biosynthesis of AMP from IMP. The protein is Adenylosuccinate synthetase of Brucella abortus (strain 2308).